The primary structure comprises 335 residues: Cytoskeleton protein RodZ (335 aa).

Topologically, residues 1–111 are cytoplasmic; sequence MNTEATHDQN…LGKRRKKRDG (111 aa). The region spanning 19–71 is the HTH cro/C1-type domain; sequence LRNAREQLGLSQQAVAERLCLKVSTVRDIEEDKAPADLASTFLRGYIRSYARL. Positions 30–49 form a DNA-binding region, H-T-H motif; it reads QQAVAERLCLKVSTVRDIEE. Residues 112-132 form a helical; Signal-anchor for type II membrane protein membrane-spanning segment; it reads WLMTFTWLVLFVVIGLSGAWW. Topologically, residues 133-335 are periplasmic; it reads WQDHKAQQEE…TLNAEQSPAQ (203 aa). The span at 148-164 shows a compositional bias: polar residues; sequence DQSSAELNNNQSQSVPL. Residues 148–239 are disordered; the sequence is DQSSAELNNN…PDGAAPLPTD (92 aa). Low complexity-rich tracts occupy residues 165 to 205 and 217 to 239; these read DTST…DPQQ and DTAATPAPAATTTPDGAAPLPTD.

It belongs to the RodZ family.

It localises to the cell inner membrane. Its function is as follows. Cytoskeletal protein that is involved in cell-shape control through regulation of the length of the long axis. The chain is Cytoskeleton protein RodZ from Escherichia coli O6:K15:H31 (strain 536 / UPEC).